Reading from the N-terminus, the 248-residue chain is Ribosomal RNA small subunit methyltransferase G (248 aa).

Residues Gly85, Phe90, 108–110, 137–138, and Arg156 each bind S-adenosyl-L-methionine; these read DSS and AE.

This sequence belongs to the methyltransferase superfamily. RNA methyltransferase RsmG family.

The protein localises to the cytoplasm. In terms of biological role, specifically methylates the N7 position of a guanine in 16S rRNA. The protein is Ribosomal RNA small subunit methyltransferase G of Prochlorococcus marinus (strain NATL1A).